The primary structure comprises 107 residues: MNYQHYRATTLGRTLQDTLDEMMERGDITKKIANLVLLRYDKSISTALKDHGTSNMSFTAERLETFRCCDNVWTLILKDAEFREDQHSLKVDVVKIVACLGTDNGNE.

Belongs to the TFIIA subunit 2 family. In terms of assembly, TFIIA is a heterodimer of the large unprocessed subunit 1 and a small subunit gamma. It was originally believed to be a heterotrimer of an alpha (p30), a beta (p20) and a gamma (p14) subunit.

The protein localises to the nucleus. Functionally, TFIIA is a component of the transcription machinery of RNA polymerase II and plays an important role in transcriptional activation. TFIIA in a complex with TBP mediates transcriptional activity. This Drosophila melanogaster (Fruit fly) protein is Transcription initiation factor IIA subunit 2-2 (TfIIA-S-2).